The sequence spans 268 residues: MEIDSKITNFEDAGTINLNLHNFVSEKFANKPKVLNVASLASNSVDEAGDSEQKVSFRINQTGNIFYSTTTPELTLESKKLFNSVTVLFAAMTKALGEKGLNLFNYEAVASLIQKSGYFVEVQKFQKNLSIKSGSLSIDTQIIQQLIPGLTSGASLDIAKGVLGALNGEFSASSSDEKVKIAHLLFICEELFGAPSVTVRLFYATKETHKTLTSSPCHKSSSVSFELNQEASTFLFVSPDTIAEFSQKFETQPEEYKNLIEKLKGYLP.

Its function is as follows. Plays an essential role in zygote formation by inducing sexual cell fusion. Overexpressing cells eventually formed many loose mounds, in which giant multinucleate cells were surrounded by normal-sized cells. The polypeptide is Zygote formation protein zyg1 (zyg1) (Dictyostelium mucoroides (Slime mold)).